Here is a 77-residue protein sequence, read N- to C-terminus: Conotoxin Ar5.1 b (77 aa).

The first 19 residues, 1-19, serve as a signal peptide directing secretion; the sequence is MLCLPVFIILLLLASPAAS. The propeptide occupies 20–44; that stretch reads NPLKTRIQSDLIRAALEDADMKNEK.

It belongs to the conotoxin T superfamily. Contains 2 disulfide bonds that can be either 'C1-C3, C2-C4' or 'C1-C4, C2-C3', since these disulfide connectivities have been observed for conotoxins with cysteine framework V (for examples, see AC P0DQQ7 and AC P81755). As to expression, expressed by the venom duct.

The protein localises to the secreted. This Conus arenatus (Sand-dusted cone) protein is Conotoxin Ar5.1 b.